The sequence spans 306 residues: Extensin (306 aa).

The N-terminal stretch at 1–32 is a signal peptide; sequence MGRIARGSKMSSLIVSLLVVLVSLNLASETTA. Residues 33-306 form a disordered region; that stretch reads KYTYSSPPPP…YTSPPPPHHY (274 aa). Composition is skewed to pro residues over residues 38–122, 133–152, 183–214, and 225–290; these read SPPP…PKHS and SPPP…SPPP.

In terms of processing, hydroxylated on proline residues in the S-P-P-P-P repeat. Post-translationally, O-glycosylated on hydroxyprolines.

It localises to the secreted. The protein resides in the primary cell wall. Structural component in primary cell wall. The polypeptide is Extensin (Daucus carota (Wild carrot)).